A 1196-amino-acid chain; its full sequence is Homeodomain-interacting protein kinase 2 (1196 aa).

Ser-16 is subject to Phosphoserine. Lys-32 participates in a covalent cross-link: Glycyl lysine isopeptide (Lys-Gly) (interchain with G-Cter in SUMO); alternate. Lys-32 participates in a covalent cross-link: Glycyl lysine isopeptide (Lys-Gly) (interchain with G-Cter in SUMO2); alternate. The tract at residues 50 to 69 (VYSQSKNIPPSQPASTTVST) is disordered. A transcriptional corepression region spans residues 97 to 230 (SASSTSVTGQ…TNEIVAIKIL (134 aa)). Phosphoserine occurs at positions 118 and 135. Phosphothreonine is present on Thr-141. Residues 189-520 (HEVLCSMTNT…DADKRVTPIE (332 aa)) are interaction with DAXX. The Protein kinase domain maps to 199–527 (YEVLEFLGRG…PIETLNHPFV (329 aa)). ATP-binding positions include 205–213 (LGRGTFGQV) and Lys-228. A phosphothreonine mark is found at Thr-252 and Thr-273. Asp-324 (proton acceptor) is an active-site residue. A Phosphotyrosine; by autocatalysis modification is found at Tyr-361. Position 441 is a phosphoserine (Ser-441). Thr-482, Thr-517, and Thr-566 each carry phosphothreonine. The segment at 539–844 (AHVKSCFQNM…KENTPPRCAM (306 aa)) is interaction with SKI and SMAD1. The interval 600 to 800 (SATLSLANPE…MRQQPTSTTS (201 aa)) is interaction with DAZAP2. A phosphoserine mark is found at Ser-634 and Ser-668. Thr-687 carries the post-translational modification Phosphothreonine. The segment at 752 to 897 (RNTHAHGSHY…ITISSDTDEE (146 aa)) is interaction with POU4F1. An interaction with CTBP1 region spans residues 774–876 (HVTLPAAQPL…TRERQRQTIV (103 aa)). Positions 787–897 (VAHVMRQQPT…ITISSDTDEE (111 aa)) are interaction with HMGA1. Disordered stretches follow at residues 792–847 (RQQP…MVHS) and 891–963 (SSDT…CTGN). The span at 793-829 (QQPTSTTSSRKSKQHQSSVRNVSTCEVTSSQAISSPQ) shows a compositional bias: polar residues. The Nuclear localization signal 1 (NLS1) signature appears at 802 to 805 (RKSK). Residues Ser-815 and Ser-827 each carry the phosphoserine modification. Residues 832 to 835 (KRVK) carry the Nuclear localization signal 2 (NLS2) motif. The tract at residues 839–934 (PPRCAMVHSS…PYSDSSSNTS (96 aa)) is interaction with TP53 and TP73. An interaction with UBE2I region spans residues 873–907 (QTIVIPDTPSPTVSVITISSDTDEEEEQKHAPTST). The interval 873–980 (QTIVIPDTPS…PLKTQASEVL (108 aa)) is localization to nuclear speckles. Positions 873-980 (QTIVIPDTPS…PLKTQASEVL (108 aa)) are required for localization to nuclear speckles. Residues 884-908 (TVSVITISSDTDEEEEQKHAPTSTV) form an SUMO interaction motifs (SIM); required for nuclear localization and kinase activity region. Positions 923–937 (DSPYSDSSSNTSPYS) are enriched in low complexity. Ser-934 bears the Phosphoserine mark. The segment at 935–1050 (PYSVQQRTGH…LSQAQQHMAA (116 aa)) is interaction with AXIN1. Polar residues predominate over residues 938–951 (VQQRTGHNGTNTLD). Residues Lys-953 and Lys-973 each participate in a glycyl lysine isopeptide (Lys-Gly) (interchain with G-Cter in SUMO2) cross-link. Residues 984–1196 (DSLGPAISAS…PAKVNQYPYI (213 aa)) form an autoinhibitory domain (AID) region. 5 positions are modified to phosphoserine: Ser-991, Ser-993, Ser-1042, Ser-1153, and Ser-1186. Residues 991–1046 (SASHHSSSFKSKSSSTVTSTSGHSSGSSSGAIAYRQQRPGPHFQQQQPLNLSQAQQ) are compositionally biased toward low complexity. The segment at 991 to 1058 (SASHHSSSFK…AADRTGSHRR (68 aa)) is disordered. Lys-1189 participates in a covalent cross-link: Glycyl lysine isopeptide (Lys-Gly) (interchain with G-Cter in SUMO).

This sequence belongs to the protein kinase superfamily. CMGC Ser/Thr protein kinase family. HIPK subfamily. As to quaternary structure, interacts with CREB1, SIAH1, WSB1, CBX4, TRADD, p53/TP53, TP73, TP63, CREBBP, DAXX, P53DINP1, SKI, SMAD1, SMAD2 and SMAD3, but not SMAD4. Interacts with SP100; positively regulates TP53-dependent transcription. Interacts with ATF1, PML, RUNX1, EP300, NKX1-2, NKX2-5, UBE2I, HMGA1, CTBP1, AXIN1, NLK, MYB, POU4F1, POU4F2, POU4F3, UBE2I, UBL1 and ZBTB4. Probably part of a complex consisting of p53/TP53, HIPK2 and AXIN1. Interacts with DAZAP2; the interaction results in phosphorylation of DAZAP2 which causes localization of DAZAP2 to the nucleus, reduces interaction of DAZAP2 with HIPK2 and prevents DAZAP2-dependent degradation of HIPK2. Interacts with SIAH1; the interaction is promoted by DAZAP2 and results in SIAH1-mediated ubiquitination and subsequent proteasomal degradation of HIPK2. Interacts with SPN/CD43 cytoplasmic tail. Post-translationally, sumoylated. When conjugated it is directed to nuclear speckles. Desumoylated by SENP1. Sumoylation on Lys-32 is promoted by the E3 SUMO-protein ligase CBX4. In terms of processing, autophosphorylation at Tyr-361 in the activation loop activates the kinase and promotes nuclear localization. Ubiquitinated by FBXO3, WSB1 and SIAH1, leading to rapid proteasome-dependent degradation. The degradation mediated by FBXO3, but not ubiquitination, is prevented in the presence of PML. The degradation mediated by WSB1 and SIAH1 is reversibly reduced upon DNA damage. Post-translationally, cleaved at Asp-923 and Asp-984 by CASP6 in a p53/TP53-dependent manner. The cleaved form lacks the autoinhibitory C-terminal domain (AID), resulting in a hyperactive kinase, which potentiates p53/TP53 Ser-46 phosphorylation and subsequent activation of the cell death machinery. In terms of tissue distribution, ubiquitous. Abundant in muscle, heart, small intestine, stomach, kidney and brain; and low in testis, skin and lung.

The protein localises to the nucleus. It localises to the PML body. The protein resides in the cytoplasm. It catalyses the reaction L-seryl-[protein] + ATP = O-phospho-L-seryl-[protein] + ADP + H(+). It carries out the reaction L-threonyl-[protein] + ATP = O-phospho-L-threonyl-[protein] + ADP + H(+). Its function is as follows. Serine/threonine-protein kinase involved in transcription regulation, p53/TP53-mediated cellular apoptosis and regulation of the cell cycle. Acts as a corepressor of several transcription factors, including SMAD1 and POU4F1/Brn3a and probably NK homeodomain transcription factors. Phosphorylates PDX1, ATF1, PML, p53/TP53, CREB1, CTBP1, CBX4, RUNX1, EP300, CTNNB1, HMGA1, ZBTB4 and DAZAP2. Inhibits cell growth and promotes apoptosis through the activation of p53/TP53 both at the transcription level and at the protein level (by phosphorylation and indirect acetylation). The phosphorylation of p53/TP53 may be mediated by a p53/TP53-HIPK2-AXIN1 complex. Involved in the response to hypoxia by acting as a transcriptional co-suppressor of HIF1A. Mediates transcriptional activation of TP73. In response to TGFB, cooperates with DAXX to activate JNK. Negative regulator through phosphorylation and subsequent proteasomal degradation of CTNNB1 and the antiapoptotic factor CTBP1. In the Wnt/beta-catenin signaling pathway acts as an intermediate kinase between MAP3K7/TAK1 and NLK to promote the proteasomal degradation of MYB. Phosphorylates CBX4 upon DNA damage and promotes its E3 SUMO-protein ligase activity. Activates CREB1 and ATF1 transcription factors by phosphorylation in response to genotoxic stress. In response to DNA damage, stabilizes PML by phosphorylation. PML, HIPK2 and FBXO3 may act synergically to activate p53/TP53-dependent transactivation. Promotes angiogenesis, and is involved in erythroid differentiation, especially during fetal liver erythropoiesis. Phosphorylation of RUNX1 and EP300 stimulates EP300 transcription regulation activity. Triggers ZBTB4 protein degradation in response to DNA damage. In response to DNA damage, phosphorylates DAZAP2 which localizes DAZAP2 to the nucleus, reduces interaction of DAZAP2 with HIPK2 and prevents DAZAP2-dependent ubiquitination of HIPK2 by E3 ubiquitin-protein ligase SIAH1 and subsequent proteasomal degradation. Modulates HMGA1 DNA-binding affinity. In response to high glucose, triggers phosphorylation-mediated subnuclear localization shifting of PDX1. Involved in the regulation of eye size, lens formation and retinal lamination during late embryogenesis. The sequence is that of Homeodomain-interacting protein kinase 2 (Hipk2) from Mus musculus (Mouse).